Here is a 266-residue protein sequence, read N- to C-terminus: uncharacterized protein (266 aa).

A PH domain is found at 35–131; that stretch reads VLVGEGVLVK…WMLHIERCVT (97 aa). The segment at 152–212 adopts an FYVE-type zinc-finger fold; that stretch reads DGEAVKCMVC…VCDHCFDSLS (61 aa). Positions 158, 161, 175, 178, 183, 186, 204, and 207 each coordinate Zn(2+). The interval 213 to 266 is disordered; sequence SATPGQEESEPKTGNRLHHEDSSSDSEDEVNGSGRSSNESRPTFYREDVQQPAT. Composition is skewed to basic and acidic residues over residues 221–234 and 256–266; these read SEPK…HEDS and FYREDVQQPAT.

This is an uncharacterized protein from Caenorhabditis elegans.